A 118-amino-acid polypeptide reads, in one-letter code: UPF0382 membrane protein C1782.12c (118 aa).

The first 18 residues, 1 to 18 (MTIWNVAALTGLLSVGLG), serve as a signal peptide directing secretion. Topologically, residues 19 to 40 (AYGSHGLQKRVQDPHLLKSWST) are lumenal. A helical transmembrane segment spans residues 41 to 61 (ACTYLMFHSLATMAVSLHPVY). At 62 to 67 (GKSRWT) the chain is on the cytoplasmic side. A helical membrane pass occupies residues 68–88 (GPLLITGSCLFSGTIYGLCLL). Over 89-96 (PKGHSLRR) the chain is Lumenal. A helical transmembrane segment spans residues 97-117 (ILGPLTPIGGLVMLTGWATML). Val-118 is a topological domain (cytoplasmic).

It belongs to the UPF0382 family.

It localises to the endoplasmic reticulum membrane. The sequence is that of UPF0382 membrane protein C1782.12c from Schizosaccharomyces pombe (strain 972 / ATCC 24843) (Fission yeast).